Reading from the N-terminus, the 344-residue chain is Phosphoribosylformylglycinamidine cyclo-ligase (344 aa).

Belongs to the AIR synthase family.

Its subcellular location is the cytoplasm. The enzyme catalyses 2-formamido-N(1)-(5-O-phospho-beta-D-ribosyl)acetamidine + ATP = 5-amino-1-(5-phospho-beta-D-ribosyl)imidazole + ADP + phosphate + H(+). It functions in the pathway purine metabolism; IMP biosynthesis via de novo pathway; 5-amino-1-(5-phospho-D-ribosyl)imidazole from N(2)-formyl-N(1)-(5-phospho-D-ribosyl)glycinamide: step 2/2. This chain is Phosphoribosylformylglycinamidine cyclo-ligase, found in Glaesserella parasuis serovar 5 (strain SH0165) (Haemophilus parasuis).